A 326-amino-acid chain; its full sequence is DNA-directed RNA polymerase subunit alpha (326 aa).

The tract at residues Met-1–Glu-231 is alpha N-terminal domain (alpha-NTD). The tract at residues Ile-245–Gly-326 is alpha C-terminal domain (alpha-CTD).

The protein belongs to the RNA polymerase alpha chain family. Homodimer. The RNAP catalytic core consists of 2 alpha, 1 beta, 1 beta' and 1 omega subunit. When a sigma factor is associated with the core the holoenzyme is formed, which can initiate transcription.

It catalyses the reaction RNA(n) + a ribonucleoside 5'-triphosphate = RNA(n+1) + diphosphate. In terms of biological role, DNA-dependent RNA polymerase catalyzes the transcription of DNA into RNA using the four ribonucleoside triphosphates as substrates. The sequence is that of DNA-directed RNA polymerase subunit alpha from Aromatoleum aromaticum (strain DSM 19018 / LMG 30748 / EbN1) (Azoarcus sp. (strain EbN1)).